Reading from the N-terminus, the 742-residue chain is MGSENSALKSYTLREPPFTLPSGLAVYPAVLQDGKFASVFVYKRENEDKVNKAAKHLKTLRHPCLLRFLSCTVEADGIHLVTERVQPLEVALETLSSAEVCAGIYDILLALIFLHDRGHLTHNNVCLSSVFVSEDGHWKLGGMETVCKVSQATPEFLRSIQSIRDPASIPPEEMSPEFTTLPECHGHARDAFSFGTLVESLLTILNEQVSADVLSSFQQTLHSTLLNPIPKCRPALCTLLSHDFFRNDFLEVVNFLKSLTLKSEEEKTEFFKFLLDRVSCLSEELIASRLVPLLLNQLVFAEPVAVKSFLPYLLGPKKDHAQGETPCLLSPALFQSRVIPVLLQLFEVHEEHVRMVLLSHIEAYVEHFTQEQLKKVILPQVLLGLRDTSDSIVAITLHSLAVLVSLLGPEVVVGGERTKIFKRTAPSFTKNTDLSLEDSPMCVVCSHHSQISPILENPFSSIFPKCFFSGSTPINSKKHIQRDYYNTLLQTGDPFSQPIKFPINGLSDVKNTSEDSENFPSSSKKSEEWPDWSEPEEPENQTVNIQIWPREPCDDVKSQCTTLDVEESSWDDCEPSSLDTKVNPGGGITATKPVTSGEQKPIPALLSLTEESMPWKSSLPQKISLVQRGDDADQIEPPKVSSQERPLKVPSELGLGEEFTIQVKKKPVKDPEMDWFADMIPEIKPSAAFLILPELRTEMVPKKDDVSPVMQFSSKFAAAEITEGEAEGWEEEGELNWEDNNW.

Gly-2 carries N-myristoyl glycine lipidation. A Protein kinase domain is found at 2 to 245 (GSENSALKSY…LCTLLSHDFF (244 aa)). 4 HEAT repeats span residues 199 to 238 (ESLL…ALCT), 285 to 323 (LIAS…HAQG), 333 to 370 (LFQS…HFTQ), and 372 to 409 (QLKK…LLGP). At Ser-439 the chain carries Phosphoserine. Disordered regions lie at residues 506-544 (LSDV…QTVN), 568-598 (SSWD…TSGE), and 629-652 (GDDA…VPSE). Positions 529–539 (WPDWSEPEEPE) are enriched in acidic residues. An interaction with EZR region spans residues 548-742 (WPREPCDDVK…GELNWEDNNW (195 aa)). Ser-707 carries the post-translational modification Phosphoserine. Positions 723–742 (EGEAEGWEEEGELNWEDNNW) are disordered.

It belongs to the protein kinase superfamily. As to quaternary structure, interacts with EZR/VIL2 C-terminal domain. May be myristoylated; myristoylation may target it to Golgi compartment. Post-translationally, phosphorylated. As to expression, ubiquitously expressed.

It is found in the cytoplasm. Its subcellular location is the golgi apparatus. The protein resides in the cell projection. It localises to the lamellipodium. May play a role in regulating cell adhesion/migration complexes in migrating cells. The polypeptide is Protein-associating with the carboxyl-terminal domain of ezrin (SCYL3) (Homo sapiens (Human)).